The sequence spans 92 residues: Small ribosomal subunit protein uS17 (92 aa).

Belongs to the universal ribosomal protein uS17 family. As to quaternary structure, part of the 30S ribosomal subunit.

Its function is as follows. One of the primary rRNA binding proteins, it binds specifically to the 5'-end of 16S ribosomal RNA. In Corynebacterium diphtheriae (strain ATCC 700971 / NCTC 13129 / Biotype gravis), this protein is Small ribosomal subunit protein uS17.